Consider the following 98-residue polypeptide: UPF0235 protein Mmc1_3654 (98 aa).

This sequence belongs to the UPF0235 family.

The chain is UPF0235 protein Mmc1_3654 from Magnetococcus marinus (strain ATCC BAA-1437 / JCM 17883 / MC-1).